The sequence spans 1205 residues: PAN2-PAN3 deadenylation complex catalytic subunit Pan2 (1205 aa).

WD repeat units follow at residues 153–193 (DESE…QKYA), 195–231 (ETPG…VEHE), 244–280 (VHGN…AITP), and 328–367 (PVGP…SFNP). Residues 368 to 484 (YSRETEFALP…PTGREEEPLH (117 aa)) are linker. The USP domain occupies 485 to 924 (TVSKKYRKVT…VPAILYYVKR (440 aa)). S784 is subject to Phosphoserine. An Exonuclease domain is found at 975–1147 (VGLDAEFVTL…EDARTALQLY (173 aa)). A divalent metal cation-binding residues include D978, E980, D1087, and D1139. Residues 1179–1205 (WKVPEPESQSSPKSKAGLRPGALGWVG) form a disordered region. Residues 1184 to 1193 (PESQSSPKSK) show a composition bias toward low complexity. Position 1189 is a phosphoserine (S1189).

This sequence belongs to the peptidase C19 family. PAN2 subfamily. In terms of assembly, forms a heterotrimer with an asymmetric homodimer of the regulatory subunit PAN3 to form the poly(A)-nuclease (PAN) deadenylation complex. Interacts with PAN3 isoform 1/Pan3L and isoform 3/Pan3S. Interacts with ZFP36. A divalent metal cation serves as cofactor.

It localises to the cytoplasm. Its subcellular location is the P-body. It is found in the nucleus. The catalysed reaction is Exonucleolytic cleavage of poly(A) to 5'-AMP.. Positively regulated by the regulatory subunit PAN3. Catalytic subunit of the poly(A)-nuclease (PAN) deadenylation complex, one of two cytoplasmic mRNA deadenylases involved in general and miRNA-mediated mRNA turnover. PAN specifically shortens poly(A) tails of RNA and the activity is stimulated by poly(A)-binding protein (PABP). PAN deadenylation is followed by rapid degradation of the shortened mRNA tails by the CCR4-NOT complex. Deadenylated mRNAs are then degraded by two alternative mechanisms, namely exosome-mediated 3'-5' exonucleolytic degradation, or deadenylation-dependent mRNA decaping and subsequent 5'-3' exonucleolytic degradation by XRN1. Also acts as an important regulator of the HIF1A-mediated hypoxic response. Required for HIF1A mRNA stability independent of poly(A) tail length regulation. This Rattus norvegicus (Rat) protein is PAN2-PAN3 deadenylation complex catalytic subunit Pan2.